We begin with the raw amino-acid sequence, 505 residues long: Mannosylglucosyl-3-phosphoglycerate synthase (505 aa).

Monomer in solution.

The enzyme catalyses (2R)-2-O-(alpha-D-glucopyranosyl)-3-phospho-glycerate + GDP-alpha-D-mannose = (2R)-2-O-[alpha-D-mannopyranosyl-(1-&gt;2)-alpha-D-glucopyranosyl]-3-phospho-glycerate + GDP + H(+). Not strictly dependent on divalent cations, but the presence of Mn(2+), Ca(2+), Mg(2+) or Co(2+) stimulates activity. Its function is as follows. Involved in the biosynthesis of the compatible solute mannosylglucosylglycerate through a phosphorylating pathway. Catalyzes the conversion of glucosyl-3-phosphoglycerate (GPG) to mannosylglucosyl-3-phosphoglycerate (MGPG). This Petrotoga mobilis (strain DSM 10674 / SJ95) protein is Mannosylglucosyl-3-phosphoglycerate synthase.